Here is a 259-residue protein sequence, read N- to C-terminus: L-cysteine S-thiosulfotransferase subunit SoxA (259 aa).

The signal sequence occupies residues methionine 1–alanine 23. The Cytochrome c domain maps to valine 50–serine 135. Heme c is bound by residues cysteine 70, cysteine 73, histidine 74, cysteine 108, cysteine 171, cysteine 174, and histidine 175. Residue arginine 216 participates in substrate binding. Cysteine 220 lines the heme c pocket. Cysteine 220 (cysteine persulfide intermediate) is an active-site residue.

Belongs to the SoxA family. In terms of assembly, heterodimer of SoxA and SoxX. It depends on heme c as a cofactor. Post-translationally, cysteine persulfide at Cys-220.

It localises to the periplasm. The enzyme catalyses L-cysteinyl-[SoxY protein] + thiosulfate + 2 Fe(III)-[cytochrome c] = S-sulfosulfanyl-L-cysteinyl-[SoxY protein] + 2 Fe(II)-[cytochrome c] + 2 H(+). It carries out the reaction S-sulfanyl-L-cysteinyl-[SoxY protein] + thiosulfate + 2 Fe(III)-[cytochrome c] = S-(2-sulfodisulfanyl)-L-cysteinyl-[SoxY protein] + 2 Fe(II)-[cytochrome c] + 2 H(+). In terms of biological role, C-type diheme cytochrome, which is part of the SoxAX cytochrome complex involved in sulfur oxidation. The SoxAX complex catalyzes the formation of a heterodisulfide bond between the conserved cysteine residue on a sulfur carrier SoxYZ complex subunit SoxY and thiosulfate or other inorganic sulfur substrates. This leads to the liberation of two electrons, which may be transferred from the SoxAX complex to another cytochrome c that then channels them into the respiratory electron transport chain. Some electrons may be used for reductive CO(2) fixation. The chain is L-cysteine S-thiosulfotransferase subunit SoxA from Hydrogenobacter thermophilus (strain DSM 6534 / IAM 12695 / TK-6).